A 268-amino-acid polypeptide reads, in one-letter code: MRFDVFTIFPGMFTGFLTESILKRAQQAGLIEIAIHNIRDWTTDKHRTVDDTPYGGGPGMVMMAPPIVHAVESVLGQEQNSTPIIIMSPSGELFTQDIARQLACFPRLALICGRYEGIDDRVRIILRARELSIGDYVLTGGELAAAVVIDVVSRLVPGVIDPESLAEESHNSGLLEYPQYTRPPIFRGLGVPEILLSGNHAKIAEWRRMMALCRTAARRPDLLARAALTPRDHELLQRCPPDPFAHQGPVYEGDQLERPEGGEQGASR.

S-adenosyl-L-methionine-binding positions include Gly-113 and 133 to 138 (IGDYVL). The interval 238–268 (RCPPDPFAHQGPVYEGDQLERPEGGEQGASR) is disordered.

It belongs to the RNA methyltransferase TrmD family. In terms of assembly, homodimer.

The protein resides in the cytoplasm. The enzyme catalyses guanosine(37) in tRNA + S-adenosyl-L-methionine = N(1)-methylguanosine(37) in tRNA + S-adenosyl-L-homocysteine + H(+). Specifically methylates guanosine-37 in various tRNAs. The chain is tRNA (guanine-N(1)-)-methyltransferase from Thermomicrobium roseum (strain ATCC 27502 / DSM 5159 / P-2).